The primary structure comprises 380 residues: Queuine tRNA-ribosyltransferase (380 aa).

The Proton acceptor role is filled by D96. Residues 96–100, D150, Q193, and G220 contribute to the substrate site; that span reads DSGGF. Residues 251–257 form an RNA binding region; that stretch reads GVGAPDS. D270 (nucleophile) is an active-site residue. An RNA binding; important for wobble base 34 recognition region spans residues 275–279; that stretch reads TRIAR. 4 residues coordinate Zn(2+): C308, C310, C313, and H339.

Belongs to the queuine tRNA-ribosyltransferase family. As to quaternary structure, homodimer. Within each dimer, one monomer is responsible for RNA recognition and catalysis, while the other monomer binds to the replacement base PreQ1. Zn(2+) is required as a cofactor.

It carries out the reaction 7-aminomethyl-7-carbaguanine + guanosine(34) in tRNA = 7-aminomethyl-7-carbaguanosine(34) in tRNA + guanine. The protein operates within tRNA modification; tRNA-queuosine biosynthesis. In terms of biological role, catalyzes the base-exchange of a guanine (G) residue with the queuine precursor 7-aminomethyl-7-deazaguanine (PreQ1) at position 34 (anticodon wobble position) in tRNAs with GU(N) anticodons (tRNA-Asp, -Asn, -His and -Tyr). Catalysis occurs through a double-displacement mechanism. The nucleophile active site attacks the C1' of nucleotide 34 to detach the guanine base from the RNA, forming a covalent enzyme-RNA intermediate. The proton acceptor active site deprotonates the incoming PreQ1, allowing a nucleophilic attack on the C1' of the ribose to form the product. After dissociation, two additional enzymatic reactions on the tRNA convert PreQ1 to queuine (Q), resulting in the hypermodified nucleoside queuosine (7-(((4,5-cis-dihydroxy-2-cyclopenten-1-yl)amino)methyl)-7-deazaguanosine). The sequence is that of Queuine tRNA-ribosyltransferase from Streptococcus uberis (strain ATCC BAA-854 / 0140J).